A 548-amino-acid polypeptide reads, in one-letter code: ATP synthase subunit alpha (548 aa).

172 to 179 contacts ATP; sequence GDRKTGKT.

Belongs to the ATPase alpha/beta chains family. In terms of assembly, F-type ATPases have 2 components, CF(1) - the catalytic core - and CF(0) - the membrane proton channel. CF(1) has five subunits: alpha(3), beta(3), gamma(1), delta(1), epsilon(1). CF(0) has three main subunits: a(1), b(2) and c(9-12). The alpha and beta chains form an alternating ring which encloses part of the gamma chain. CF(1) is attached to CF(0) by a central stalk formed by the gamma and epsilon chains, while a peripheral stalk is formed by the delta and b chains.

The protein resides in the cell membrane. It carries out the reaction ATP + H2O + 4 H(+)(in) = ADP + phosphate + 5 H(+)(out). Functionally, produces ATP from ADP in the presence of a proton gradient across the membrane. The alpha chain is a regulatory subunit. In Mycobacteroides abscessus (strain ATCC 19977 / DSM 44196 / CCUG 20993 / CIP 104536 / JCM 13569 / NCTC 13031 / TMC 1543 / L948) (Mycobacterium abscessus), this protein is ATP synthase subunit alpha.